Consider the following 257-residue polypeptide: UPF0246 protein Rsph17029_0026 (257 aa).

Belongs to the UPF0246 family.

The chain is UPF0246 protein Rsph17029_0026 from Cereibacter sphaeroides (strain ATCC 17029 / ATH 2.4.9) (Rhodobacter sphaeroides).